The primary structure comprises 154 residues: Transcriptional repressor NrdR (154 aa).

The segment at 3–34 is a zinc-finger region; sequence CPFCTHPDTRVADSRLMEERNAVRRRRHCPNC. The 91-residue stretch at 49–139 folds into the ATP-cone domain; it reads PAVIGPDKKR…LHKRFDNPAD (91 aa).

It belongs to the NrdR family. It depends on Zn(2+) as a cofactor.

In terms of biological role, negatively regulates transcription of bacterial ribonucleotide reductase nrd genes and operons by binding to NrdR-boxes. This chain is Transcriptional repressor NrdR, found in Neisseria meningitidis serogroup A / serotype 4A (strain DSM 15465 / Z2491).